The chain runs to 588 residues: NADP-dependent malic enzyme 2 (588 aa).

The disordered stretch occupies residues 1 to 21 (MGSTPTDLPGEDVADNRSGVG). Residue glycine 2 is modified to N-acetylglycine. Residue tyrosine 136 is the Proton donor of the active site. Arginine 189 is a binding site for NADP(+). Lysine 207 functions as the Proton acceptor in the catalytic mechanism. A divalent metal cation contacts are provided by glutamate 279, aspartate 280, and aspartate 303. NADP(+) is bound by residues aspartate 303, 332–348 (LFLG…ELIA), and asparagine 444.

The protein belongs to the malic enzymes family. In terms of assembly, homohexamers and homooctamers. Requires Mg(2+) as cofactor. The cofactor is Mn(2+). Expressed in leaves, stems, flowers and roots. Particularly present in vasculatures, trichome basal cells and hydatodes.

Its subcellular location is the cytoplasm. The catalysed reaction is (S)-malate + NADP(+) = pyruvate + CO2 + NADPH. It catalyses the reaction oxaloacetate + H(+) = pyruvate + CO2. With respect to regulation, activated by coenzyme A (CoA), aspartate, succinate and fumarate. Repressed by oxaloacetate, glucose and ATP. The polypeptide is NADP-dependent malic enzyme 2 (NADP-ME2) (Arabidopsis thaliana (Mouse-ear cress)).